We begin with the raw amino-acid sequence, 732 residues long: Small conductance calcium-activated potassium channel protein 3 (732 aa).

A compositionally biased stretch (basic and acidic residues) spans 1–11; it reads MDTSGHFHDSG. Disordered regions lie at residues 1 to 82 and 119 to 161; these read MDTS…QQAP and AILH…QASP. A compositionally biased stretch (pro residues) spans 35-61; the sequence is QPPPPPAPPAVPQQPPGPLLQPQPPQP. Low complexity predominate over residues 62–82; it reads QQQQSQQQQQQQSQQQQQQAP. The segment covering 119 to 133 has biased composition (polar residues); the sequence is AILHPSSRQGSQLNL. The span at 139–148 shows a compositional bias: low complexity; that stretch reads GHSPSSTATS. Residue Ser-168 is modified to Phosphoserine. Residues 241-257 are compositionally biased toward polar residues; sequence THNHQHAGTTAGSTTFP. Residues 241-260 are disordered; that stretch reads THNHQHAGTTAGSTTFPKAN. A helical membrane pass occupies residues 289–309; that stretch reads LIFGMFGIVVMVIETELSWGL. A helical transmembrane segment spans residues 316–336; the sequence is FSLALKCLISLSTVILLGLII. A helical membrane pass occupies residues 367-387; the sequence is ISLEMLVCAIHPIPGEYKFFW. A helical membrane pass occupies residues 406 to 426; it reads IILSIPMFLRLYLIARVMLLH. A helical transmembrane segment spans residues 455–475; it reads LMTICPGTVLLVFSISLWIIA. Positions 495 to 515 form an intramembrane region, pore-forming; it reads FLGAMWLISITFLSIGYGDMV. The helical transmembrane segment at 524–544 threads the bilayer; that stretch reads VCLLTGIMGAGCTALVVAVVA. The calmodulin-binding stretch occupies residues 562–638; that stretch reads DTQLTKRIKN…LVDLSKMQNV (77 aa). The stretch at 643–670 forms a coiled coil; sequence ITELNDRSEDLEKQIGSLESKLEHLTAS. The interval 704-732 is disordered; it reads GTSHAPPSDSPIGISSTSFPTPYTSSSSC. Low complexity predominate over residues 718 to 732; the sequence is SSTSFPTPYTSSSSC.

It belongs to the potassium channel KCNN family. KCa2.3/KCNN3 subfamily. As to quaternary structure, homodimer. Heteromultimer with KCNN2 or KCNN1; this modulates plasma membrane expression and consequently the small conductance calcium-activated potassium channel activity. The complex is composed of 4 channel subunits each of which binds to a calmodulin subunit which regulates the channel activity through calcium-binding. Interacts with CALM1. Expressed at low levels in atrial and ventricular myocytes (at protein level).

It localises to the cell membrane. The protein localises to the cytoplasm. The protein resides in the myofibril. It is found in the sarcomere. Its subcellular location is the z line. The enzyme catalyses K(+)(in) = K(+)(out). With respect to regulation, inhibited by bee venom neurotoxin apamin. Small conductance calcium-activated potassium channel that mediates the voltage-independent transmembrane transfer of potassium across the cell membrane through a constitutive interaction with calmodulin which binds the intracellular calcium allowing its opening. The current is characterized by a voltage-independent activation, an intracellular calcium concentration increase-dependent activation and a single-channel conductance of 10 picosiemens. Also presents an inwardly rectifying current, thus reducing its already small outward conductance of potassium ions, which is particularly the case when the membrane potential displays positive values, above + 20 mV. Activation is followed by membrane hyperpolarization. Thought to regulate neuronal excitability by contributing to the slow component of synaptic afterhyperpolarization. This Mus musculus (Mouse) protein is Small conductance calcium-activated potassium channel protein 3.